The sequence spans 389 residues: Succinate--CoA ligase [ADP-forming] subunit beta (389 aa).

In terms of domain architecture, ATP-grasp spans 9-244 (KQLFADYGLP…PSQEDERERR (236 aa)). Residues Lys46, 53–55 (GRG), Glu99, Thr102, and Glu107 contribute to the ATP site. 2 residues coordinate Mg(2+): Asn199 and Asp213. Substrate contacts are provided by residues Asn264 and 321-323 (GIV).

It belongs to the succinate/malate CoA ligase beta subunit family. As to quaternary structure, heterotetramer of two alpha and two beta subunits. Mg(2+) is required as a cofactor.

It catalyses the reaction succinate + ATP + CoA = succinyl-CoA + ADP + phosphate. It carries out the reaction GTP + succinate + CoA = succinyl-CoA + GDP + phosphate. Its pathway is carbohydrate metabolism; tricarboxylic acid cycle; succinate from succinyl-CoA (ligase route): step 1/1. In terms of biological role, succinyl-CoA synthetase functions in the citric acid cycle (TCA), coupling the hydrolysis of succinyl-CoA to the synthesis of either ATP or GTP and thus represents the only step of substrate-level phosphorylation in the TCA. The beta subunit provides nucleotide specificity of the enzyme and binds the substrate succinate, while the binding sites for coenzyme A and phosphate are found in the alpha subunit. The chain is Succinate--CoA ligase [ADP-forming] subunit beta from Alcanivorax borkumensis (strain ATCC 700651 / DSM 11573 / NCIMB 13689 / SK2).